A 216-amino-acid polypeptide reads, in one-letter code: UPF0598 protein C8orf82 (216 aa).

It belongs to the UPF0598 family.

This Homo sapiens (Human) protein is UPF0598 protein C8orf82 (C8orf82).